We begin with the raw amino-acid sequence, 292 residues long: Ribosomal protein L11 methyltransferase (292 aa).

S-adenosyl-L-methionine is bound by residues T144, G165, D187, and N229.

This sequence belongs to the methyltransferase superfamily. PrmA family.

The protein localises to the cytoplasm. It carries out the reaction L-lysyl-[protein] + 3 S-adenosyl-L-methionine = N(6),N(6),N(6)-trimethyl-L-lysyl-[protein] + 3 S-adenosyl-L-homocysteine + 3 H(+). Its function is as follows. Methylates ribosomal protein L11. The polypeptide is Ribosomal protein L11 methyltransferase (Pseudomonas fluorescens (strain SBW25)).